We begin with the raw amino-acid sequence, 421 residues long: Signal recognition particle receptor FtsY (421 aa).

Basic residues predominate over residues 1-10; the sequence is MFSFFRRKKK. The disordered stretch occupies residues 1 to 22; it reads MFSFFRRKKKQETPAPEEAQIQ. GTP is bound by residues 228–235, 309–313, and 373–376; these read GINGAGKT, DTAGR, and TKLD.

The protein belongs to the GTP-binding SRP family. FtsY subfamily. In terms of assembly, part of the signal recognition particle protein translocation system, which is composed of SRP and FtsY. SRP is a ribonucleoprotein composed of Ffh and a 4.5S RNA molecule.

The protein localises to the cell membrane. Its subcellular location is the cytoplasm. It catalyses the reaction GTP + H2O = GDP + phosphate + H(+). Functionally, involved in targeting and insertion of nascent membrane proteins into the cytoplasmic membrane. Acts as a receptor for the complex formed by the signal recognition particle (SRP) and the ribosome-nascent chain (RNC). Interaction with SRP-RNC leads to the transfer of the RNC complex to the Sec translocase for insertion into the membrane, the hydrolysis of GTP by both Ffh and FtsY, and the dissociation of the SRP-FtsY complex into the individual components. The protein is Signal recognition particle receptor FtsY of Neisseria meningitidis serogroup C.